Consider the following 486-residue polypeptide: MSHTLKSKTLQELDIEEIKETNPLLKLVQGQRIVQVPELVLESGVVINNFPIAYKTWGTLNEAGDNVLVICHALTGSADVADWWGPLLGNDLAFDPSRFFIICLNSMGSPYGSFSPLTINEETGVRYGPEFPLCTVRDDVRAHRIVLDSLGVKSIACVIGGSMGGMLSLEWAAMYGKEYVKNMVALATSARHSAWCISWSEAQRQSIYSDPNYLDGYYPVEEQPVAGLSAARMSALLTYRTRNSFENKFSRRSPSIAQQQKAQREETRKPSTVSEHSLQIHNDGYKTKASTAIAGISGQKGQSVVSTASSSDSLNSSTSMTSVSSVTGEVKDIKPAQTYFSAQSYLRYQGTKFINRFDANCYIAITRKLDTHDLARDRVDDITEVLSTIQQPSLIIGIQSDGLFTYSEQEFLAEHIPKSQLEKIESPEGHDAFLLEFKLINKLIVQFLKTNCKAITDAAPRAWGGDVGNDETKTSVFGEAEEVTNW.

Positions 66-436 (NVLVICHALT…PEGHDAFLLE (371 aa)) constitute an AB hydrolase-1 domain. S162 acts as the Nucleophile in catalysis. A disordered region spans residues 248-281 (KFSRRSPSIAQQQKAQREETRKPSTVSEHSLQIH). Composition is skewed to polar residues over residues 250 to 261 (SRRSPSIAQQQK) and 270 to 280 (PSTVSEHSLQI). Residues D401 and H430 contribute to the active site.

The protein belongs to the AB hydrolase superfamily. MetX family.

The protein localises to the cytoplasm. The enzyme catalyses L-homoserine + acetyl-CoA = O-acetyl-L-homoserine + CoA. The protein operates within amino-acid biosynthesis; L-methionine biosynthesis via de novo pathway; O-acetyl-L-homoserine from L-homoserine: step 1/1. In terms of biological role, commits homoserine to the methionine biosynthesis pathway by catalyzing its O-acetylation. In Saccharomyces cerevisiae (strain ATCC 204508 / S288c) (Baker's yeast), this protein is Homoserine O-acetyltransferase (MET2).